The following is a 487-amino-acid chain: 6-phosphogluconate dehydrogenase, decarboxylating 1, chloroplastic (487 aa).

Residue Met1 is modified to N-acetylmethionine. NADP(+)-binding positions include 13 to 18 (GLAVMG), 36 to 38 (NRT), 80 to 82 (VKA), and Asn108. Substrate contacts are provided by residues Asn108 and 134-136 (SGG). The active-site Proton acceptor is Lys188. Substrate is bound at residue 191–192 (HN). Glu195 acts as the Proton donor in catalysis. Residues Tyr196, Lys266, Arg293, Arg458, and His464 each contribute to the substrate site.

This sequence belongs to the 6-phosphogluconate dehydrogenase family. Forms homodimer. Forms heterodimers with PGD2 or PGD3.

It localises to the plastid. The protein resides in the chloroplast. Its subcellular location is the cytoplasm. The protein localises to the cytosol. The catalysed reaction is 6-phospho-D-gluconate + NADP(+) = D-ribulose 5-phosphate + CO2 + NADPH. Its pathway is carbohydrate degradation; pentose phosphate pathway; D-ribulose 5-phosphate from D-glucose 6-phosphate (oxidative stage): step 3/3. Functionally, catalyzes the oxidative decarboxylation of 6-phosphogluconate to ribulose 5-phosphate and CO(2), with concomitant reduction of NADP to NADPH. This is 6-phosphogluconate dehydrogenase, decarboxylating 1, chloroplastic from Arabidopsis thaliana (Mouse-ear cress).